The sequence spans 544 residues: Chaperonin GroEL (544 aa).

Residues 29-32 (TIGP), 86-90 (DGTTT), glycine 413, 478-480 (NAA), and aspartate 494 each bind ATP.

Belongs to the chaperonin (HSP60) family. As to quaternary structure, forms a cylinder of 14 subunits composed of two heptameric rings stacked back-to-back. Interacts with the co-chaperonin GroES.

It is found in the cytoplasm. The enzyme catalyses ATP + H2O + a folded polypeptide = ADP + phosphate + an unfolded polypeptide.. In terms of biological role, together with its co-chaperonin GroES, plays an essential role in assisting protein folding. The GroEL-GroES system forms a nano-cage that allows encapsulation of the non-native substrate proteins and provides a physical environment optimized to promote and accelerate protein folding. In Exiguobacterium sp. (strain ATCC BAA-1283 / AT1b), this protein is Chaperonin GroEL.